Consider the following 553-residue polypeptide: Putative transport protein KPK_0013 (553 aa).

Transmembrane regions (helical) follow at residues 4-24 (IALTVSVLALVAVVGLWIGNV), 28-48 (GVGFGIGGVLFGGIIVGHFVD), 65-85 (FGLILFVYTIGIQVGPGFFAS), 95-115 (LFAILIVILGGLVTAVLHKLF), and 158-178 (MSYAMAYPFGICGILLTMWLV). RCK C-terminal domains lie at 192 to 276 (RFEE…VIGQ) and 279 to 361 (ATSL…ELGN). 6 helical membrane-spanning segments follow: residues 371-391 (MLPVFIGIGLGVLLGSIPLFI), 403-425 (AGGPLIMALILGRIGSIGKLYWF), 437-457 (LGIVLFLAVVGLKSGGDFVAT), 464-484 (LSWIAYGIFITAIPLLTVGIL), 493-513 (YLTLCGMLAGSMTDPPALAFA), and 532-552 (PLVMFLRIITPQLLAVLFWGL).

It belongs to the AAE transporter (TC 2.A.81) family. YidE subfamily.

The protein localises to the cell membrane. This Klebsiella pneumoniae (strain 342) protein is Putative transport protein KPK_0013.